A 122-amino-acid chain; its full sequence is Large ribosomal subunit protein uL14c (122 aa).

It belongs to the universal ribosomal protein uL14 family. As to quaternary structure, part of the 50S ribosomal subunit.

It is found in the plastid. The protein resides in the chloroplast. Functionally, binds to 23S rRNA. This Populus alba (White poplar) protein is Large ribosomal subunit protein uL14c.